The primary structure comprises 172 residues: 3-hydroxydecanoyl-[acyl-carrier-protein] dehydratase (172 aa).

Residue His-71 is part of the active site.

Belongs to the thioester dehydratase family. FabA subfamily. As to quaternary structure, homodimer.

It is found in the cytoplasm. It carries out the reaction a (3R)-hydroxyacyl-[ACP] = a (2E)-enoyl-[ACP] + H2O. It catalyses the reaction (3R)-hydroxydecanoyl-[ACP] = (2E)-decenoyl-[ACP] + H2O. The enzyme catalyses (2E)-decenoyl-[ACP] = (3Z)-decenoyl-[ACP]. The protein operates within lipid metabolism; fatty acid biosynthesis. In terms of biological role, necessary for the introduction of cis unsaturation into fatty acids. Catalyzes the dehydration of (3R)-3-hydroxydecanoyl-ACP to E-(2)-decenoyl-ACP and then its isomerization to Z-(3)-decenoyl-ACP. Can catalyze the dehydratase reaction for beta-hydroxyacyl-ACPs with saturated chain lengths up to 16:0, being most active on intermediate chain length. In Serratia proteamaculans (strain 568), this protein is 3-hydroxydecanoyl-[acyl-carrier-protein] dehydratase.